The chain runs to 290 residues: Phosphatidylserine decarboxylase proenzyme (290 aa).

Catalysis depends on charge relay system; for autoendoproteolytic cleavage activity residues D96, H153, and S257. S257 acts as the Schiff-base intermediate with substrate; via pyruvic acid; for decarboxylase activity in catalysis. At S257 the chain carries Pyruvic acid (Ser); by autocatalysis.

This sequence belongs to the phosphatidylserine decarboxylase family. PSD-B subfamily. Prokaryotic type I sub-subfamily. As to quaternary structure, heterodimer of a large membrane-associated beta subunit and a small pyruvoyl-containing alpha subunit. The cofactor is pyruvate. In terms of processing, is synthesized initially as an inactive proenzyme. Formation of the active enzyme involves a self-maturation process in which the active site pyruvoyl group is generated from an internal serine residue via an autocatalytic post-translational modification. Two non-identical subunits are generated from the proenzyme in this reaction, and the pyruvate is formed at the N-terminus of the alpha chain, which is derived from the carboxyl end of the proenzyme. The autoendoproteolytic cleavage occurs by a canonical serine protease mechanism, in which the side chain hydroxyl group of the serine supplies its oxygen atom to form the C-terminus of the beta chain, while the remainder of the serine residue undergoes an oxidative deamination to produce ammonia and the pyruvoyl prosthetic group on the alpha chain. During this reaction, the Ser that is part of the protease active site of the proenzyme becomes the pyruvoyl prosthetic group, which constitutes an essential element of the active site of the mature decarboxylase.

The protein resides in the cell membrane. It catalyses the reaction a 1,2-diacyl-sn-glycero-3-phospho-L-serine + H(+) = a 1,2-diacyl-sn-glycero-3-phosphoethanolamine + CO2. It functions in the pathway phospholipid metabolism; phosphatidylethanolamine biosynthesis; phosphatidylethanolamine from CDP-diacylglycerol: step 2/2. Its function is as follows. Catalyzes the formation of phosphatidylethanolamine (PtdEtn) from phosphatidylserine (PtdSer). This chain is Phosphatidylserine decarboxylase proenzyme, found in Haemophilus influenzae (strain 86-028NP).